Reading from the N-terminus, the 404-residue chain is MMTYEYILVRYGEMTTKGKNRSKFVSTLKDNVKFKLKKFPNIKIDATHDRMYIQLNGEDHEAVSERLKDVFGIHKFNLAMKVPSELEDIKKGALAAFLQVKGDVKTFKITVHRSYKHFPMRTMELLPEIGGHILENTEDITVDVHNPDVNVRVEIRSGYSYIMCDERMGAGGLPVGVGGKVMVLLSGGIDSPVAAYLTMKRGVSVEAVHFHSPPFTSERAKQKVIDLAQELTKYCKRVTLHLVPFTEVQKTINKEIPSSYSMTVMRRMMMRITERIAEERNALAITTGESLGQVASQTLDSMHTINEVTNYPVIRPLITMDKLEIIKIAEEIGTYEISIRPYEDCCTVFTPASPATKPKREKANRFEAKYDFTPLIDEAVANKETMVLQTVEVVAEEEKFEELF.

The THUMP domain maps to 61-166; it reads EAVSERLKDV…SGYSYIMCDE (106 aa). ATP-binding positions include 184–185, 209–210, arginine 266, glycine 288, and glutamine 297; these read LL and HF.

Belongs to the ThiI family.

It localises to the cytoplasm. The catalysed reaction is [ThiI sulfur-carrier protein]-S-sulfanyl-L-cysteine + a uridine in tRNA + 2 reduced [2Fe-2S]-[ferredoxin] + ATP + H(+) = [ThiI sulfur-carrier protein]-L-cysteine + a 4-thiouridine in tRNA + 2 oxidized [2Fe-2S]-[ferredoxin] + AMP + diphosphate. It catalyses the reaction [ThiS sulfur-carrier protein]-C-terminal Gly-Gly-AMP + S-sulfanyl-L-cysteinyl-[cysteine desulfurase] + AH2 = [ThiS sulfur-carrier protein]-C-terminal-Gly-aminoethanethioate + L-cysteinyl-[cysteine desulfurase] + A + AMP + 2 H(+). The protein operates within cofactor biosynthesis; thiamine diphosphate biosynthesis. Its function is as follows. Catalyzes the ATP-dependent transfer of a sulfur to tRNA to produce 4-thiouridine in position 8 of tRNAs, which functions as a near-UV photosensor. Also catalyzes the transfer of sulfur to the sulfur carrier protein ThiS, forming ThiS-thiocarboxylate. This is a step in the synthesis of thiazole, in the thiamine biosynthesis pathway. The sulfur is donated as persulfide by IscS. The sequence is that of Probable tRNA sulfurtransferase from Bacillus cereus (strain ZK / E33L).